The following is a 442-amino-acid chain: Proline--tRNA ligase (442 aa).

The protein belongs to the class-II aminoacyl-tRNA synthetase family. ProS type 2 subfamily. As to quaternary structure, homodimer.

It localises to the cytoplasm. The enzyme catalyses tRNA(Pro) + L-proline + ATP = L-prolyl-tRNA(Pro) + AMP + diphosphate. In terms of biological role, catalyzes the attachment of proline to tRNA(Pro) in a two-step reaction: proline is first activated by ATP to form Pro-AMP and then transferred to the acceptor end of tRNA(Pro). This chain is Proline--tRNA ligase, found in Brucella suis (strain ATCC 23445 / NCTC 10510).